The following is a 266-amino-acid chain: Hydroxyacylglutathione hydrolase (266 aa).

Residues His53, His55, Asp57, His58, His118, Asp140, and His178 each coordinate Zn(2+).

This sequence belongs to the metallo-beta-lactamase superfamily. Glyoxalase II family. As to quaternary structure, monomer. Zn(2+) is required as a cofactor.

It catalyses the reaction an S-(2-hydroxyacyl)glutathione + H2O = a 2-hydroxy carboxylate + glutathione + H(+). Its pathway is secondary metabolite metabolism; methylglyoxal degradation; (R)-lactate from methylglyoxal: step 2/2. Functionally, thiolesterase that catalyzes the hydrolysis of S-D-lactoyl-glutathione to form glutathione and D-lactic acid. The polypeptide is Hydroxyacylglutathione hydrolase (Cupriavidus taiwanensis (strain DSM 17343 / BCRC 17206 / CCUG 44338 / CIP 107171 / LMG 19424 / R1) (Ralstonia taiwanensis (strain LMG 19424))).